The primary structure comprises 143 residues: MQEIEIFCDGSSLGNPGPGGYAAILRYKDKEKTISGGEEFTTNNRMELRALNEALKILKRPCRITLYSDSQYVCQAINVWLVNWQKKNFSKVKNVDLWKEFLKVSKGHLIMAVWIKGHNGHAENERCDSLAKLEAQKRTKTIT.

In terms of domain architecture, RNase H type-1 spans 1-136 (MQEIEIFCDG…CDSLAKLEAQ (136 aa)). 4 residues coordinate Mg(2+): D9, E47, D69, and D128.

It belongs to the RNase H family. In terms of assembly, monomer. The cofactor is Mg(2+).

Its subcellular location is the cytoplasm. It carries out the reaction Endonucleolytic cleavage to 5'-phosphomonoester.. In terms of biological role, endonuclease that specifically degrades the RNA of RNA-DNA hybrids. The chain is Ribonuclease H from Helicobacter pylori (strain HPAG1).